Reading from the N-terminus, the 568-residue chain is Lipoprotein LpqB (568 aa).

Residues 1-23 (MSKISTKLKALSAVLSVTTLVAG) form the signal peptide. C24 carries N-palmitoyl cysteine lipidation. C24 is lipidated: S-diacylglycerol cysteine.

It belongs to the LpqB lipoprotein family.

Its subcellular location is the cell membrane. In Corynebacterium glutamicum (strain R), this protein is Lipoprotein LpqB.